The sequence spans 196 residues: Heat shock protein beta-8 (196 aa).

Phosphoserine is present on residues Ser24 and Ser57. Residue Thr63 is modified to Phosphothreonine; by PKC; in vitro. An asymmetric dimethylarginine mark is found at Arg71 and Arg78. The region spanning 74–185 (TATARFGVPA…TFGESSFNNE (112 aa)) is the sHSP domain. The disordered stretch occupies residues 176-196 (TFGESSFNNELPQDSQEVTCT). A compositionally biased stretch (polar residues) spans 177–196 (FGESSFNNELPQDSQEVTCT).

Belongs to the small heat shock protein (HSP20) family. In terms of assembly, monomer. Forms a ternary complex with BAG3 and HSPA1A. Component of the chaperone-assisted selective autophagy (CASA) complex consisting of BAG3, HSPA8/HSC70, HSPB8 and STUB1/CHIP. Interacts with HSPB1. Interacts with DNAJB6. Interacts with BAG3. In terms of tissue distribution, predominantly expressed in skeletal muscle and heart.

The protein resides in the cytoplasm. Its subcellular location is the nucleus. Involved in the chaperone-assisted selective autophagy (CASA), a crucial process for protein quality control, particularly in mechanical strained cells and tissues such as muscle. Displays temperature-dependent chaperone activity. This Homo sapiens (Human) protein is Heat shock protein beta-8 (HSPB8).